A 34-amino-acid chain; its full sequence is Photosystem II reaction center protein M (34 aa).

A helical transmembrane segment spans residues 7 to 27; that stretch reads GFVASLLFILVPAIFLIVLYI.

It belongs to the PsbM family. In terms of assembly, PSII is composed of 1 copy each of membrane proteins PsbA, PsbB, PsbC, PsbD, PsbE, PsbF, PsbH, PsbI, PsbJ, PsbK, PsbL, PsbM, PsbT, PsbX, PsbY, PsbZ, Psb30/Ycf12, peripheral proteins PsbO, CyanoQ (PsbQ), PsbU, PsbV and a large number of cofactors. It forms dimeric complexes.

The protein localises to the cellular thylakoid membrane. One of the components of the core complex of photosystem II (PSII). PSII is a light-driven water:plastoquinone oxidoreductase that uses light energy to abstract electrons from H(2)O, generating O(2) and a proton gradient subsequently used for ATP formation. It consists of a core antenna complex that captures photons, and an electron transfer chain that converts photonic excitation into a charge separation. This subunit is found at the monomer-monomer interface. This chain is Photosystem II reaction center protein M, found in Parasynechococcus marenigrum (strain WH8102).